A 211-amino-acid chain; its full sequence is Outer surface protein C (211 aa).

The first 18 residues, 1–18, serve as a signal peptide directing secretion; sequence MKKNTLSAILMTLFLFIS. A lipid anchor (N-palmitoyl cysteine) is attached at cysteine 19. Cysteine 19 carries S-diacylglycerol cysteine lipidation.

This sequence belongs to the OspC lipoprotein family. As to quaternary structure, homodimer. Interacts with tick I.ricinus salivary protein Iric-1, Iric-2 and Iric-3. Binds human (host) plasminogen.

It is found in the cell outer membrane. Its subcellular location is the cell surface. Major immunodominant protein in mammalian hosts. Required for initial stages of mammalian infection. Inhibits macrophage-mediated phagocytosis of the bacteria. Binds human plasminogen; this probably confers an extracellular protease activity on the bacteria that allows it to traverse tissue. Interaction with tick I.ricinus salivary protein Salp15 protects the bacteria from antibody-mediated killing in vitro and in vivo. The chain is Outer surface protein C from Borreliella burgdorferi (Lyme disease spirochete).